The chain runs to 462 residues: Tryptophan dimethylallyltransferase ifgA (462 aa).

Residues 83-84 (IL) and E92 contribute to the L-tryptophan site. 3 residues coordinate substrate: R103, K189, and Y191. Positions 193 and 246 each coordinate L-tryptophan. Substrate-binding residues include R259, K261, Y263, Q345, and Y347.

It belongs to the tryptophan dimethylallyltransferase family. Homodimer.

It catalyses the reaction L-tryptophan + dimethylallyl diphosphate = 4-(3-methylbut-2-enyl)-L-tryptophan + diphosphate. It participates in alkaloid biosynthesis; ergot alkaloid biosynthesis. In terms of biological role, tryptophan dimethylallyltransferase; part of the gene cluster that mediates the biosynthesis of isofumigaclavines, fungal ergot alkaloids. The tryptophan dimethylallyltransferase ifgA catalyzes the first step of ergot alkaloid biosynthesis by condensing dimethylallyl diphosphate (DMAP) and tryptophan to form 4-dimethylallyl-L-tryptophan. The second step is catalyzed by the methyltransferase ifgB that methylates 4-dimethylallyl-L-tryptophan in the presence of S-adenosyl-L-methionine, resulting in the formation of N-methyl-dimethylallyl-L-tryptophan. The catalase ifgD and the FAD-dependent oxidoreductase ifgC then transform N-methyl-dimethylallyl-L-tryptophan to chanoclavine-I which is further oxidized by ifgE in the presence of NAD(+), resulting in the formation of chanoclavine-I aldehyde. The chanoclavine-I aldehyde reductases ifgG and/or fgaOx3 reduce chanoclavine-I aldehyde to dihydrochanoclavine-I aldehyde that spontaneously dehydrates to form 6,8-dimethyl-6,7-didehydroergoline. The festuclavine dehydrogenases ifgF1 and/or ifgF2 then catalyze the reduction of 6,8-dimethyl-6,7-didehydroergoline to form festuclavine. Hydrolysis of festuclavine by a yet undetermined cytochrome P450 monooxygenase (called ifgH) then leads to the formation of isofumigaclavine B which is in turn acetylated by ifgI to isofumigaclavine A. Penicillium roqueforti has interestingly at least two sets of genes for the consumption of chanoclavine-I aldehyde on three different loci, the OYEs ifgG/fgaOx3 and the festuclavine synthase homologs ifgF1/ifgF2. The reason for the duplication of these genes is unclear, probably to ensure the conversion of chanoclavine-I aldehyde by differential gene expression under various environmental conditions. The sequence is that of Tryptophan dimethylallyltransferase ifgA from Penicillium roqueforti (strain FM164).